The sequence spans 136 residues: Secreted RxLR effector protein 63 (136 aa).

Positions 1–21 (MQRFPYSLLLLLLSATNRSRR) are cleaved as a signal peptide. A RxLR motif is present at residues 43-46 (RMLR).

It belongs to the RxLR effector family.

The protein localises to the secreted. It localises to the host nucleus. Effector that partially suppresses the tobacco programmed cell death induced by cell death-inducing proteins. This is Secreted RxLR effector protein 63 from Plasmopara viticola (Downy mildew of grapevine).